We begin with the raw amino-acid sequence, 240 residues long: Cell division protein FtsQ (240 aa).

Residues 1-7 (MTGPGLR) are Cytoplasmic-facing. The helical transmembrane segment at 8-28 (LLAGMGLAGALVLGLSLWLHF) threads the bilayer. The Periplasmic segment spans residues 29–240 (DPDQHLPIGS…EADNDGGNAR (212 aa)). A POTRA domain is found at 34-102 (LPIGSIQITG…DTLEVHVTEP (69 aa)).

This sequence belongs to the FtsQ/DivIB family. FtsQ subfamily. Part of a complex composed of FtsB, FtsL and FtsQ.

The protein localises to the cell inner membrane. Its function is as follows. Essential cell division protein. May link together the upstream cell division proteins, which are predominantly cytoplasmic, with the downstream cell division proteins, which are predominantly periplasmic. May control correct divisome assembly. This Thioalkalivibrio sp. (strain K90mix) protein is Cell division protein FtsQ.